Reading from the N-terminus, the 287-residue chain is Phosphatidylserine decarboxylase proenzyme (287 aa).

Residues D90, H147, and S252 each act as charge relay system; for autoendoproteolytic cleavage activity in the active site. Catalysis depends on S252, which acts as the Schiff-base intermediate with substrate; via pyruvic acid; for decarboxylase activity. Pyruvic acid (Ser); by autocatalysis is present on S252.

It belongs to the phosphatidylserine decarboxylase family. PSD-B subfamily. Prokaryotic type I sub-subfamily. As to quaternary structure, heterodimer of a large membrane-associated beta subunit and a small pyruvoyl-containing alpha subunit. Pyruvate serves as cofactor. Is synthesized initially as an inactive proenzyme. Formation of the active enzyme involves a self-maturation process in which the active site pyruvoyl group is generated from an internal serine residue via an autocatalytic post-translational modification. Two non-identical subunits are generated from the proenzyme in this reaction, and the pyruvate is formed at the N-terminus of the alpha chain, which is derived from the carboxyl end of the proenzyme. The autoendoproteolytic cleavage occurs by a canonical serine protease mechanism, in which the side chain hydroxyl group of the serine supplies its oxygen atom to form the C-terminus of the beta chain, while the remainder of the serine residue undergoes an oxidative deamination to produce ammonia and the pyruvoyl prosthetic group on the alpha chain. During this reaction, the Ser that is part of the protease active site of the proenzyme becomes the pyruvoyl prosthetic group, which constitutes an essential element of the active site of the mature decarboxylase.

The protein localises to the cell membrane. It catalyses the reaction a 1,2-diacyl-sn-glycero-3-phospho-L-serine + H(+) = a 1,2-diacyl-sn-glycero-3-phosphoethanolamine + CO2. The protein operates within phospholipid metabolism; phosphatidylethanolamine biosynthesis; phosphatidylethanolamine from CDP-diacylglycerol: step 2/2. Catalyzes the formation of phosphatidylethanolamine (PtdEtn) from phosphatidylserine (PtdSer). The chain is Phosphatidylserine decarboxylase proenzyme from Pseudomonas entomophila (strain L48).